The sequence spans 271 residues: Protein FAM110D (271 aa).

The span at 1 to 13 (MLLSSPTTPSRGR) shows a compositional bias: polar residues. 3 disordered regions span residues 1 to 84 (MLLS…PDSL), 118 to 149 (DAAP…TGKR), and 186 to 242 (PQSW…GRPT).

It belongs to the FAM110 family.

The chain is Protein FAM110D from Mus musculus (Mouse).